Reading from the N-terminus, the 443-residue chain is Threonine/serine transporter TdcC (443 aa).

A run of 11 helical transmembrane segments spans residues 22-42, 44-64, 97-117, 140-160, 163-183, 207-227, 261-281, 311-331, 366-386, 389-409, and 423-443; these read TTWT…FFPI, AGFG…PIAF, GVVI…IYGV, FVAL…KDLM, VMSY…LSLI, ILIT…FSPI, MLMV…LSPA, FAIT…FKSF, ISMI…PNIL, IEAM…MYAI, and DNVF…YKLF.

This sequence belongs to the amino acid/polyamine transporter 2 family. SdaC/TdcC subfamily.

It localises to the cell inner membrane. It carries out the reaction L-threonine(in) + H(+)(in) = L-threonine(out) + H(+)(out). The catalysed reaction is L-serine(in) + H(+)(in) = L-serine(out) + H(+)(out). Functionally, involved in the import of threonine and serine into the cell, with the concomitant import of a proton (symport system). In Shigella boydii serotype 18 (strain CDC 3083-94 / BS512), this protein is Threonine/serine transporter TdcC.